Here is a 195-residue protein sequence, read N- to C-terminus: Glycerol-3-phosphate acyltransferase (195 aa).

6 consecutive transmembrane segments (helical) span residues 4–24 (GLIL…GLLL), 53–73 (GLAA…VLIA), 80–100 (TAVW…WLGF), 110–130 (LGVL…IWLA), 133–153 (FLFR…PIAL), and 154–174 (YFLS…IVFI).

It belongs to the PlsY family. As to quaternary structure, probably interacts with PlsX.

The protein localises to the cell inner membrane. It carries out the reaction an acyl phosphate + sn-glycerol 3-phosphate = a 1-acyl-sn-glycero-3-phosphate + phosphate. It participates in lipid metabolism; phospholipid metabolism. Its function is as follows. Catalyzes the transfer of an acyl group from acyl-phosphate (acyl-PO(4)) to glycerol-3-phosphate (G3P) to form lysophosphatidic acid (LPA). This enzyme utilizes acyl-phosphate as fatty acyl donor, but not acyl-CoA or acyl-ACP. This chain is Glycerol-3-phosphate acyltransferase, found in Mesorhizobium japonicum (strain LMG 29417 / CECT 9101 / MAFF 303099) (Mesorhizobium loti (strain MAFF 303099)).